A 732-amino-acid chain; its full sequence is Ionotropic receptor 40a (732 aa).

The N-terminal stretch at 1–19 (MHKFLALGLLPYLLGLLNS) is a signal peptide. 3 N-linked (GlcNAc...) asparagine glycosylation sites follow: N18, N235, and N299. Residues 20–369 (TRLTFIGNDE…RPFKQDIWPH (350 aa)) are Extracellular-facing. A helical membrane pass occupies residues 370-390 (LILTIIFSGPIFYGIIALPYI). Topologically, residues 391 to 465 (WRRRWANSDV…NELHNGYRAK (75 aa)) are cytoplasmic. A helical transmembrane segment spans residues 466–486 (FLTIVYWIAATYVLADVYSAQ). At 487-688 (LTSQFARPAR…LNLRMLQGAF (202 aa)) the chain is on the extracellular side. N531 carries an N-linked (GlcNAc...) asparagine glycan. A helical transmembrane segment spans residues 689–709 (IALGVGSLAAGVILLLEIVFI). Residues 710-732 (KLDQARLWMLCSRLQWIRYDRKV) are Cytoplasmic-facing.

The protein belongs to the glutamate-gated ion channel (TC 1.A.10.1) family. In the antenna, detected in sacculus neurons which innervate the first and second chambers (at protein level).

It is found in the cell membrane. Functionally, integral part of a neural sensory system in the antenna that provides the neural basis for the response to environmental changes in humidity (hygrosensation). Together with Ir25a and Ir93a, mediates the response of the hygrosensory sacculus neurons to changes in relative humidity and is required for dry detection behavior. The polypeptide is Ionotropic receptor 40a (Drosophila melanogaster (Fruit fly)).